The following is a 664-amino-acid chain: Protein SIEVE ELEMENT OCCLUSION C (664 aa).

The sequence is that of Protein SIEVE ELEMENT OCCLUSION C from Arabidopsis thaliana (Mouse-ear cress).